Reading from the N-terminus, the 317-residue chain is UV DNA damage endonuclease (317 aa).

This sequence belongs to the uve1/UvsE family.

In terms of biological role, component in a DNA repair pathway. Removal of UV LIGHT damaged nucleotides. Recognizes pyrimidine dimers and cleave a phosphodiester bond immediately 5' to the lesion. The sequence is that of UV DNA damage endonuclease from Bacillus thuringiensis subsp. konkukian (strain 97-27).